We begin with the raw amino-acid sequence, 1958 residues long: Probable Rho GTPase-activating protein CG5521 (1958 aa).

Disordered regions lie at residues 1-21, 400-424, and 635-804; these read MFTK…QDSK, PPFL…RSQR, and GSVW…GIEG. The segment covering 400–414 has biased composition (pro residues); that stretch reads PPFLLEPNDDPPPPS. Positions 640-656 are enriched in low complexity; the sequence is GSGSNSAANGGSAASAA. 3 positions are modified to phosphoserine: serine 718, serine 764, and serine 767. The segment covering 758–774 has biased composition (basic and acidic residues); that stretch reads DLRRAMSLDSLARKGDA. A compositionally biased stretch (acidic residues) spans 775 to 785; that stretch reads EETDSYQEGDN. Serine 787, serine 791, serine 793, and serine 795 each carry phosphoserine. Residues 788 to 800 are compositionally biased toward polar residues; it reads GAGSRSPSPTASS. At tyrosine 980 the chain carries Phosphotyrosine. Residues 1534 to 1568 form a disordered region; that stretch reads HSTQAPSPALRHASSNSSLQQPDQRSLHSTTASFD. A compositionally biased stretch (polar residues) spans 1546–1568; it reads ASSNSSLQQPDQRSLHSTTASFD. Serine 1551 carries the post-translational modification Phosphoserine. The region spanning 1612-1819 is the Rap-GAP domain; that stretch reads LRNVDLQKCR…EERNRSLDSV (208 aa). The segment at 1903–1958 is disordered; it reads ATGMSSASPRGPRKLGAPFKSVTKKHSLQHIAVGGGAGAGGDTPPESPTLPQRRFK. Threonine 1945 is subject to Phosphothreonine. Position 1949 is a phosphoserine (serine 1949).

In Drosophila melanogaster (Fruit fly), this protein is Probable Rho GTPase-activating protein CG5521.